Here is a 59-residue protein sequence, read N- to C-terminus: Large ribosomal subunit protein uL30 (59 aa).

This sequence belongs to the universal ribosomal protein uL30 family. In terms of assembly, part of the 50S ribosomal subunit.

The polypeptide is Large ribosomal subunit protein uL30 (Aliivibrio fischeri (strain MJ11) (Vibrio fischeri)).